The chain runs to 265 residues: UPF0246 protein NT01EI_0662 (265 aa).

It belongs to the UPF0246 family.

This is UPF0246 protein NT01EI_0662 from Edwardsiella ictaluri (strain 93-146).